Reading from the N-terminus, the 343-residue chain is 2-deoxy-scyllo-inosamine dehydrogenase (343 aa).

Residues Cys37, His59, Cys91, Cys94, Cys97, Cys105, and Glu146 each contribute to the Zn(2+) site.

It belongs to the zinc-containing alcohol dehydrogenase family. DOIA dehydrogenase subfamily. Requires Zn(2+) as cofactor.

The enzyme catalyses 2-deoxy-scyllo-inosamine + NADP(+) = 3-amino-2,3-dideoxy-scyllo-inosose + NADPH + H(+). The catalysed reaction is 2-deoxy-scyllo-inosamine + NAD(+) = 3-amino-2,3-dideoxy-scyllo-inosose + NADH + H(+). It functions in the pathway metabolic intermediate biosynthesis; 2-deoxystreptamine biosynthesis; 2-deoxystreptamine from D-glucose 6-phosphate: step 3/4. The protein operates within antibiotic biosynthesis; kanamycin biosynthesis. In terms of biological role, catalyzes the oxidation of 2-deoxy-scyllo-inosamine (DOIA) with NAD(+) or NADP(+), forming 3-amino-2,3-dideoxy-scyllo-inosose (amino-DOI). The sequence is that of 2-deoxy-scyllo-inosamine dehydrogenase (kanE) from Streptomyces kanamyceticus.